Reading from the N-terminus, the 138-residue chain is uncharacterized protein (138 aa).

A DNA-binding region (H-T-H motif) is located at residues 17 to 38; sequence LCRNDVAHEAGTNNVQIMRIEK.

This is an uncharacterized protein from Herpetosiphon aurantiacus (Herpetosiphon giganteus).